The primary structure comprises 179 residues: Peptide deformylase (179 aa).

Positions 103 and 145 each coordinate Fe cation. E146 is an active-site residue. H149 provides a ligand contact to Fe cation.

This sequence belongs to the polypeptide deformylase family. Requires Fe(2+) as cofactor.

It carries out the reaction N-terminal N-formyl-L-methionyl-[peptide] + H2O = N-terminal L-methionyl-[peptide] + formate. Its function is as follows. Removes the formyl group from the N-terminal Met of newly synthesized proteins. Requires at least a dipeptide for an efficient rate of reaction. N-terminal L-methionine is a prerequisite for activity but the enzyme has broad specificity at other positions. In Leptospira biflexa serovar Patoc (strain Patoc 1 / Ames), this protein is Peptide deformylase.